The following is a 507-amino-acid chain: Cystathionine beta-synthase (507 aa).

Position 53 is an N6-(pyridoxal phosphate)lysine (Lys-53). Asn-84 is a pyridoxal 5'-phosphate binding site. At Ser-134 the chain carries Phosphoserine. Pyridoxal 5'-phosphate is bound by residues 196–200 and Ser-289; that span reads GTGGT. Residues Ser-350 and Ser-424 each carry the phosphoserine modification. The 60-residue stretch at 373-432 folds into the CBS domain; sequence HLKPVVSVKETAKVTDVIKILKDNGFDQLPVLTEDGKLSGLVTLSELLRKLSINNSNNDN.

It belongs to the cysteine synthase/cystathionine beta-synthase family. Pyridoxal 5'-phosphate serves as cofactor.

It catalyses the reaction L-homocysteine + L-serine = L,L-cystathionine + H2O. Its pathway is amino-acid biosynthesis; L-cysteine biosynthesis; L-cysteine from L-homocysteine and L-serine: step 1/2. The polypeptide is Cystathionine beta-synthase (CYS4) (Saccharomyces cerevisiae (strain ATCC 204508 / S288c) (Baker's yeast)).